The sequence spans 205 residues: Guanylate kinase (205 aa).

The Guanylate kinase-like domain maps to 5-184 (GLLIVLSGPS…AVQKIKGIVE (180 aa)). Residue 12–19 (GPSGVGKG) coordinates ATP.

This sequence belongs to the guanylate kinase family.

It is found in the cytoplasm. The enzyme catalyses GMP + ATP = GDP + ADP. Functionally, essential for recycling GMP and indirectly, cGMP. The protein is Guanylate kinase of Listeria monocytogenes serotype 4b (strain F2365).